A 280-amino-acid chain; its full sequence is 2-dehydro-3-deoxyphosphooctonate aldolase (280 aa).

Belongs to the KdsA family.

The protein resides in the cytoplasm. The enzyme catalyses D-arabinose 5-phosphate + phosphoenolpyruvate + H2O = 3-deoxy-alpha-D-manno-2-octulosonate-8-phosphate + phosphate. It participates in carbohydrate biosynthesis; 3-deoxy-D-manno-octulosonate biosynthesis; 3-deoxy-D-manno-octulosonate from D-ribulose 5-phosphate: step 2/3. Its pathway is bacterial outer membrane biogenesis; lipopolysaccharide biosynthesis. In Coxiella burnetii (strain CbuG_Q212) (Coxiella burnetii (strain Q212)), this protein is 2-dehydro-3-deoxyphosphooctonate aldolase.